A 366-amino-acid polypeptide reads, in one-letter code: MEETSVAGDPGPDAGTSTAPNAAPEPVARRQRILFVGEAATLAHVVRPFVLARSLDPSRYEVHFACDPRFNKLLGPLPFPHHPIHTVPSEEVLLKIAQGRLFYNTRTLRKYIAADRKILNEIAPDVVVGDNRLSLSVSARLAGIPYIAIANAYWSPQARRRFPLPDVPWTRFFGVRPVSILYRLYRPLIFALYCLPLNWLRRKHGLSSLGWDLCRIFTDGDYTLYADVPELVPTYNLPANHRYLGPVLWSPDVKPPTWWHSLPTDRPIIYATLGSSGGKNLLQVVLNALGRFTRDGDRGHRWPEPPEERAGQRLRRGLPAGRSGCSALRRGALQRRQPDDAAGVGGRGAGDRAPQQHGPALEHGGP.

2 disordered regions span residues 1–23 and 295–366; these read MEETSVAGDPGPDAGTSTAPNAA and DGDR…HGGP. Residues 295–311 are compositionally biased toward basic and acidic residues; it reads DGDRGHRWPEPPEERAG.

It belongs to the UDP-glycosyltransferase family.

This Mycobacterium bovis (strain ATCC BAA-935 / AF2122/97) protein is Inactive PGL/p-HBAD biosynthesis glycosyltransferase Mb2982c.